The sequence spans 445 residues: tRNA-2-methylthio-N(6)-dimethylallyladenosine synthase (445 aa).

The MTTase N-terminal domain occupies 3-120 (RKLFIQTHGC…LPGLITQAAS (118 aa)). The [4Fe-4S] cluster site is built by cysteine 12, cysteine 49, cysteine 83, cysteine 157, cysteine 161, and cysteine 164. The Radical SAM core domain maps to 143–375 (SVDGPSAFVS…QQRINQNVQD (233 aa)). The TRAM domain occupies 378–442 (RKMVGSTQRI…SNSLLGTDPR (65 aa)).

This sequence belongs to the methylthiotransferase family. MiaB subfamily. As to quaternary structure, monomer. Requires [4Fe-4S] cluster as cofactor.

It localises to the cytoplasm. It catalyses the reaction N(6)-dimethylallyladenosine(37) in tRNA + (sulfur carrier)-SH + AH2 + 2 S-adenosyl-L-methionine = 2-methylsulfanyl-N(6)-dimethylallyladenosine(37) in tRNA + (sulfur carrier)-H + 5'-deoxyadenosine + L-methionine + A + S-adenosyl-L-homocysteine + 2 H(+). In terms of biological role, catalyzes the methylthiolation of N6-(dimethylallyl)adenosine (i(6)A), leading to the formation of 2-methylthio-N6-(dimethylallyl)adenosine (ms(2)i(6)A) at position 37 in tRNAs that read codons beginning with uridine. The sequence is that of tRNA-2-methylthio-N(6)-dimethylallyladenosine synthase from Alcanivorax borkumensis (strain ATCC 700651 / DSM 11573 / NCIMB 13689 / SK2).